Reading from the N-terminus, the 371-residue chain is Peptide chain release factor 2 (371 aa).

Gln253 is modified (N5-methylglutamine).

The protein belongs to the prokaryotic/mitochondrial release factor family. In terms of processing, methylated by PrmC. Methylation increases the termination efficiency of RF2.

The protein resides in the cytoplasm. Peptide chain release factor 2 directs the termination of translation in response to the peptide chain termination codons UGA and UAA. This Mycobacterium ulcerans (strain Agy99) protein is Peptide chain release factor 2.